Here is a 70-residue protein sequence, read N- to C-terminus: MGLIASAIAIGLAALGAGIGNGLIVSKTIEGTARQPEARGTLTSMMFVGVALVEALPIIAVVIAFMVQGK.

2 helical membrane-spanning segments follow: residues 4-24 and 47-67; these read IASAIAIGLAALGAGIGNGLI and FVGVALVEALPIIAVVIAFMV.

It belongs to the ATPase C chain family. F-type ATPases have 2 components, F(1) - the catalytic core - and F(0) - the membrane proton channel. F(1) has five subunits: alpha(3), beta(3), gamma(1), delta(1), epsilon(1). F(0) has three main subunits: a(1), b(2) and c(10-14). The alpha and beta chains form an alternating ring which encloses part of the gamma chain. F(1) is attached to F(0) by a central stalk formed by the gamma and epsilon chains, while a peripheral stalk is formed by the delta and b chains.

The protein localises to the cell membrane. Functionally, f(1)F(0) ATP synthase produces ATP from ADP in the presence of a proton or sodium gradient. F-type ATPases consist of two structural domains, F(1) containing the extramembraneous catalytic core and F(0) containing the membrane proton channel, linked together by a central stalk and a peripheral stalk. During catalysis, ATP synthesis in the catalytic domain of F(1) is coupled via a rotary mechanism of the central stalk subunits to proton translocation. Its function is as follows. Key component of the F(0) channel; it plays a direct role in translocation across the membrane. A homomeric c-ring of between 10-14 subunits forms the central stalk rotor element with the F(1) delta and epsilon subunits. The chain is ATP synthase subunit c from Priestia megaterium (strain ATCC 12872 / QMB1551) (Bacillus megaterium).